Consider the following 244-residue polypeptide: uncharacterized protein (244 aa).

The disordered stretch occupies residues 1 to 127 (MSGPQGSDPR…YPGQYGPYGQ (127 aa)). Polar residues predominate over residues 34-43 (WQQQPTQEAT). Composition is skewed to low complexity over residues 45-75 (QAPA…YAQP) and 88-127 (PGQY…PYGQ). The helical transmembrane segment at 136–156 (VAVIGGVIAVMAVLFIGAVLI) threads the bilayer.

The protein resides in the membrane. This is an uncharacterized protein from Mycobacterium tuberculosis (strain CDC 1551 / Oshkosh).